A 426-amino-acid chain; its full sequence is Histidine--tRNA ligase (426 aa).

This sequence belongs to the class-II aminoacyl-tRNA synthetase family. In terms of assembly, homodimer.

Its subcellular location is the cytoplasm. The enzyme catalyses tRNA(His) + L-histidine + ATP = L-histidyl-tRNA(His) + AMP + diphosphate + H(+). This chain is Histidine--tRNA ligase, found in Prochlorococcus marinus (strain MIT 9312).